The sequence spans 218 residues: Adenylate kinase (218 aa).

10-15 contributes to the ATP binding site; sequence GAGKGT. The NMP stretch occupies residues 30 to 59; sequence STGDMLRAAVKAGTPLGQQAKAVMDAGKLV. AMP-binding positions include T31, R36, 57–59, 85–88, and Q92; these read KLV and GFPR. The segment at 122 to 159 is LID; that stretch reads GRRSHPASGRTYHVKFNPPKVEGKDDVTGEDLIQREDD. ATP contacts are provided by residues R123 and 132–133; that span reads TY. Positions 127-147 are disordered; the sequence is PASGRTYHVKFNPPKVEGKDD. R156 and R167 together coordinate AMP. Residue G203 participates in ATP binding.

The protein belongs to the adenylate kinase family. Monomer.

It is found in the cytoplasm. It carries out the reaction AMP + ATP = 2 ADP. The protein operates within purine metabolism; AMP biosynthesis via salvage pathway; AMP from ADP: step 1/1. Catalyzes the reversible transfer of the terminal phosphate group between ATP and AMP. Plays an important role in cellular energy homeostasis and in adenine nucleotide metabolism. The polypeptide is Adenylate kinase (Paracidovorax citrulli (strain AAC00-1) (Acidovorax citrulli)).